Reading from the N-terminus, the 372-residue chain is Chaperone protein DnaJ (372 aa).

Residues 5 to 69 form the J domain; sequence DYYEVLGLSK…QKKAQYDQFG (65 aa). The segment at 129–211 adopts a CR-type zinc-finger fold; that stretch reads GAEKEISVKK…CGGTGRKVKT (83 aa). The Zn(2+) site is built by Cys142, Cys145, Cys159, Cys162, Cys185, Cys188, Cys199, and Cys202. 4 CXXCXGXG motif repeats span residues 142–149, 159–166, 185–192, and 199–206; these read CDTCDGSG, CSTCGGRG, CPDCGGTG, and CSDCGGTG.

Belongs to the DnaJ family. Homodimer. Zn(2+) serves as cofactor.

It localises to the cytoplasm. In terms of biological role, participates actively in the response to hyperosmotic and heat shock by preventing the aggregation of stress-denatured proteins and by disaggregating proteins, also in an autonomous, DnaK-independent fashion. Unfolded proteins bind initially to DnaJ; upon interaction with the DnaJ-bound protein, DnaK hydrolyzes its bound ATP, resulting in the formation of a stable complex. GrpE releases ADP from DnaK; ATP binding to DnaK triggers the release of the substrate protein, thus completing the reaction cycle. Several rounds of ATP-dependent interactions between DnaJ, DnaK and GrpE are required for fully efficient folding. Also involved, together with DnaK and GrpE, in the DNA replication of plasmids through activation of initiation proteins. The chain is Chaperone protein DnaJ from Macrococcus caseolyticus (strain JCSC5402) (Macrococcoides caseolyticum).